Consider the following 652-residue polypeptide: Putative glycine--tRNA ligase (652 aa).

The segment at 119-145 (GDKEARGQNSNDQPEESDDKKKRKKKV) is disordered. Glutamate 221 is a glycine binding site. Residues 253-255 (RNE) and 264-265 (RV) contribute to the ATP site. Glutamate 272 lines the glycine pocket. 380–381 (EC) is an ATP binding site. 499–501 (EPS) is a glycine binding site. Arginine 506 serves as a coordination point for ATP.

Belongs to the class-II aminoacyl-tRNA synthetase family. As to quaternary structure, homodimer.

It localises to the cytoplasm. It carries out the reaction tRNA(Gly) + glycine + ATP = glycyl-tRNA(Gly) + AMP + diphosphate. It catalyses the reaction 2 ATP + H(+) = P(1),P(4)-bis(5'-adenosyl) tetraphosphate + diphosphate. In terms of biological role, catalyzes the ATP-dependent ligation of glycine to the 3'-end of its cognate tRNA, via the formation of an aminoacyl-adenylate intermediate (Gly-AMP). Also produces diadenosine tetraphosphate (Ap4A), a universal pleiotropic signaling molecule needed for cell regulation pathways, by direct condensation of 2 ATPs. Thereby, may play a special role in Ap4A homeostasis. The protein is Putative glycine--tRNA ligase (grs1) of Schizosaccharomyces pombe (strain 972 / ATCC 24843) (Fission yeast).